The sequence spans 149 residues: Large ribosomal subunit protein eL19 (149 aa).

A disordered region spans residues 45 to 94 (VADGTIDAEDTQGNSRGRARERDAKESYGHKKGAGSRKGKAGARQNEKRE). The span at 62-73 (RARERDAKESYG) shows a compositional bias: basic and acidic residues. Over residues 74–85 (HKKGAGSRKGKA) the composition is skewed to basic residues.

This sequence belongs to the eukaryotic ribosomal protein eL19 family. In terms of assembly, part of the 50S ribosomal subunit.

Its function is as follows. Binds to the 23S rRNA. The chain is Large ribosomal subunit protein eL19 from Halobacterium salinarum (strain ATCC 700922 / JCM 11081 / NRC-1) (Halobacterium halobium).